The primary structure comprises 63 residues: uncharacterized protein (63 aa).

The helical transmembrane segment at 20 to 40 (IVLLISFIFFFGRFIYSSVGA) threads the bilayer.

The protein localises to the membrane. This is an uncharacterized protein from Escherichia coli O157:H7.